A 579-amino-acid polypeptide reads, in one-letter code: Protein alan shepard (579 aa).

The segment covering 1–12 (MHPRYSPAPPPQ) has biased composition (pro residues). The interval 1-66 (MHPRYSPAPP…GSSSSAAAAP (66 aa)) is disordered. Tyr5 bears the Phosphotyrosine mark. Residues 13–24 (QQQQMGGPPHQQ) are compositionally biased toward low complexity. Gly residues predominate over residues 25-35 (QGGGGGGGGSM). Polar residues predominate over residues 37 to 54 (GPSNAQQLPPQIPRSQNY). The segment covering 55–66 (SNGSSSSAAAAP) has biased composition (low complexity). Residues Tyr125 and Tyr142 each carry the phosphotyrosine modification. The tract at residues 164–225 (PATTTYGQRV…TVQNQNQQGG (62 aa)) is disordered. Low complexity predominate over residues 178–225 (SPSNTNSSSSSNTGSQSGTLSTSLSNTTNTNTNMGPNGTVQNQNQQGG). 2 consecutive RRM domains span residues 231–304 (TNLY…MAKQ) and 310–389 (TNLY…FADG). The interval 553-579 (MTDSEQASTAASPDEAYTQYPHQAAPK) is disordered.

Functionally, has a role in the perception of gravity. The chain is Protein alan shepard from Drosophila sechellia (Fruit fly).